A 236-amino-acid polypeptide reads, in one-letter code: Small ribosomal subunit protein uS2c (236 aa).

Belongs to the universal ribosomal protein uS2 family.

It is found in the plastid. It localises to the chloroplast. This Chaetosphaeridium globosum (Charophycean green alga) protein is Small ribosomal subunit protein uS2c (rps2).